Consider the following 243-residue polypeptide: Probable 2-phosphosulfolactate phosphatase (243 aa).

The protein belongs to the ComB family. Mg(2+) is required as a cofactor.

The enzyme catalyses (2R)-O-phospho-3-sulfolactate + H2O = (2R)-3-sulfolactate + phosphate. This is Probable 2-phosphosulfolactate phosphatase from Prochlorococcus marinus (strain MIT 9303).